The primary structure comprises 516 residues: MSNKPIADMIETIEHFAQTQPSYPVYNVLGQEHTYGDLKADSDSLAAVIDQLGLPEKSPVVVFGGQEYEMLATFVALTKSGHAYIPIDSHSALERVSAILEVAEPSLIIAISAFPLEQVSTPMINLAQVQEAFAQGNNYEITHPVKGDDNYYIIFTSGTTGKPKGVQISHDNLLSFTNWMITDKEFATPSRPQMLAQPPYSFDLSVMYWAPTLALGGTLFTLPSVITQDFKQLFAAIFSLPIAIWTSTPSFADMAMLSEYFNSEKMPGITHFYFDGEELTVKTAQKLRERFPNARIINAYGPTEATVALSAVAVTDEMLATLKRLPIGYTKADSPTFIIDEEGNKLPNGEQGEIIVSGPAVSKGYMNNPEKTAEAFFEFEDLPAYHTGDVGTMTDEGLLLYGGRMDFQIKFNGYRIELEDVSQNLNKSRFIESAVAVPRYNKDHKVQNLLAYVILKDGVREQFERDIDITKAIKEDLTDIMMSYMMPSKFLYRDSLPLTPNGKIDIKGLINEVNKR.

156–157 is a binding site for ATP; that stretch reads TS. D203 is a binding site for D-alanine. 298-303 serves as a coordination point for ATP; that stretch reads NAYGPT. A D-alanine-binding site is contributed by V307. Residues D389, 401 to 404, and K503 contribute to the ATP site; that span reads YGGR. Position 503 (K503) interacts with D-alanine.

It belongs to the ATP-dependent AMP-binding enzyme family. DltA subfamily.

It is found in the cytoplasm. It catalyses the reaction holo-[D-alanyl-carrier protein] + D-alanine + ATP = D-alanyl-[D-alanyl-carrier protein] + AMP + diphosphate. Its pathway is cell wall biogenesis; lipoteichoic acid biosynthesis. In terms of biological role, catalyzes the first step in the D-alanylation of lipoteichoic acid (LTA), the activation of D-alanine and its transfer onto the D-alanyl carrier protein (Dcp) DltC. In an ATP-dependent two-step reaction, forms a high energy D-alanyl-AMP intermediate, followed by transfer of the D-alanyl residue as a thiol ester to the phosphopantheinyl prosthetic group of the Dcp. D-alanylation of LTA plays an important role in modulating the properties of the cell wall in Gram-positive bacteria, influencing the net charge of the cell wall. The protein is D-alanine--D-alanyl carrier protein ligase of Streptococcus pneumoniae serotype 4 (strain ATCC BAA-334 / TIGR4).